A 213-amino-acid polypeptide reads, in one-letter code: Nicotinate-nucleotide adenylyltransferase (213 aa).

It belongs to the NadD family.

The enzyme catalyses nicotinate beta-D-ribonucleotide + ATP + H(+) = deamido-NAD(+) + diphosphate. It participates in cofactor biosynthesis; NAD(+) biosynthesis; deamido-NAD(+) from nicotinate D-ribonucleotide: step 1/1. Functionally, catalyzes the reversible adenylation of nicotinate mononucleotide (NaMN) to nicotinic acid adenine dinucleotide (NaAD). This chain is Nicotinate-nucleotide adenylyltransferase, found in Salmonella typhi.